A 472-amino-acid polypeptide reads, in one-letter code: Aspartyl/glutamyl-tRNA(Asn/Gln) amidotransferase subunit B (472 aa).

It belongs to the GatB/GatE family. GatB subfamily. As to quaternary structure, heterotrimer of A, B and C subunits.

The catalysed reaction is L-glutamyl-tRNA(Gln) + L-glutamine + ATP + H2O = L-glutaminyl-tRNA(Gln) + L-glutamate + ADP + phosphate + H(+). The enzyme catalyses L-aspartyl-tRNA(Asn) + L-glutamine + ATP + H2O = L-asparaginyl-tRNA(Asn) + L-glutamate + ADP + phosphate + 2 H(+). Its function is as follows. Allows the formation of correctly charged Asn-tRNA(Asn) or Gln-tRNA(Gln) through the transamidation of misacylated Asp-tRNA(Asn) or Glu-tRNA(Gln) in organisms which lack either or both of asparaginyl-tRNA or glutaminyl-tRNA synthetases. The reaction takes place in the presence of glutamine and ATP through an activated phospho-Asp-tRNA(Asn) or phospho-Glu-tRNA(Gln). The polypeptide is Aspartyl/glutamyl-tRNA(Asn/Gln) amidotransferase subunit B (Sulfolobus acidocaldarius (strain ATCC 33909 / DSM 639 / JCM 8929 / NBRC 15157 / NCIMB 11770)).